A 425-amino-acid polypeptide reads, in one-letter code: MTLIEDARKGVVTDFVKKAAEYEGIEAEKLIRLISHGYVVLPKNVRREEVQPRAIGMLTSTKVNANVGTSADYINVEEEVEKAIIAQKAGADAVMDLSSGGDLDAIRKRIMEVVEVPFGTVPIYQAARDCHRVVDMDEDDFFRVVEKHAKDGVDFMTIHAGVNWVSVERLRRSKRLLGVVSRGGAITIGWMLHNEKENPYYKDFDYLLEILKEYDVTISLGDAYRPGCIHDAGDRAKYTEFIMLGELVEKCREKGVQCMVEGPGHVPLDQIETSVRAMKSVTDNAPLYLLGPLVTDIAAGYDHIAAAIGAAIAGMAGADFICYVTPSEHLALPTVEDVREGVIAAKIAAHAIDLIKEGQRERARQRDYEMSLARKNLDWERQFELSIDPEKAREIYSRRKSESEACSMCGDLCAIKLVKEAFERD.

Substrate-binding positions include N66, M95, Y124, H159, 181–183 (SRG), 222–225 (DAYR), and E261. H265 is a Zn(2+) binding site. A substrate-binding site is contributed by Y288. Residue H329 coordinates Zn(2+). The [4Fe-4S] cluster site is built by C406, C409, and C413.

Belongs to the ThiC family. [4Fe-4S] cluster serves as cofactor.

The catalysed reaction is 5-amino-1-(5-phospho-beta-D-ribosyl)imidazole + S-adenosyl-L-methionine = 4-amino-2-methyl-5-(phosphooxymethyl)pyrimidine + CO + 5'-deoxyadenosine + formate + L-methionine + 3 H(+). It participates in cofactor biosynthesis; thiamine diphosphate biosynthesis. Catalyzes the synthesis of the hydroxymethylpyrimidine phosphate (HMP-P) moiety of thiamine from aminoimidazole ribotide (AIR) in a radical S-adenosyl-L-methionine (SAM)-dependent reaction. The polypeptide is Phosphomethylpyrimidine synthase (Archaeoglobus fulgidus (strain ATCC 49558 / DSM 4304 / JCM 9628 / NBRC 100126 / VC-16)).